The chain runs to 115 residues: NADH-ubiquinone oxidoreductase chain 3 (115 aa).

3 helical membrane passes run 4–24 (LMVM…AFWL), 55–75 (FFLV…LLPL), and 87–107 (MMLT…YEWM).

This sequence belongs to the complex I subunit 3 family. Core subunit of respiratory chain NADH dehydrogenase (Complex I) which is composed of 45 different subunits. Interacts with TMEM186. Interacts with TMEM242.

Its subcellular location is the mitochondrion inner membrane. The enzyme catalyses a ubiquinone + NADH + 5 H(+)(in) = a ubiquinol + NAD(+) + 4 H(+)(out). Core subunit of the mitochondrial membrane respiratory chain NADH dehydrogenase (Complex I) which catalyzes electron transfer from NADH through the respiratory chain, using ubiquinone as an electron acceptor. Essential for the catalytic activity of complex I. In Peromyscus mexicanus (Mexican deer mouse), this protein is NADH-ubiquinone oxidoreductase chain 3.